The chain runs to 122 residues: Large ribosomal subunit protein uL14 (122 aa).

It belongs to the universal ribosomal protein uL14 family. As to quaternary structure, part of the 50S ribosomal subunit. Forms a cluster with proteins L3 and L19. In the 70S ribosome, L14 and L19 interact and together make contacts with the 16S rRNA in bridges B5 and B8.

Binds to 23S rRNA. Forms part of two intersubunit bridges in the 70S ribosome. This Parafrankia sp. (strain EAN1pec) protein is Large ribosomal subunit protein uL14.